A 206-amino-acid polypeptide reads, in one-letter code: RNA-free ribonuclease P (206 aa).

A disordered region spans residues 187–206 (NLAGDDPGHAPPCGPDQPAG). The span at 195-206 (HAPPCGPDQPAG) shows a compositional bias: pro residues.

It belongs to the HARP family.

The catalysed reaction is Endonucleolytic cleavage of RNA, removing 5'-extranucleotides from tRNA precursor.. Functionally, RNA-free RNase P that catalyzes the removal of the 5'-leader sequence from pre-tRNA to produce the mature 5'-terminus. The chain is RNA-free ribonuclease P from Halorhodospira halophila (strain DSM 244 / SL1) (Ectothiorhodospira halophila (strain DSM 244 / SL1)).